Reading from the N-terminus, the 203-residue chain is Superoxide dismutase [Mn] (203 aa).

Positions 27, 81, 164, and 168 each coordinate Mn(2+).

It belongs to the iron/manganese superoxide dismutase family. As to quaternary structure, homodimer. The cofactor is Mn(2+).

It carries out the reaction 2 superoxide + 2 H(+) = H2O2 + O2. Functionally, destroys superoxide anion radicals which are normally produced within the cells and which are toxic to biological systems. The chain is Superoxide dismutase [Mn] (sodA) from Pseudomonas putida (Arthrobacter siderocapsulatus).